The sequence spans 202 residues: Large ribosomal subunit protein bL25 (202 aa).

Residues 1–21 (MSKESYELKAEARERVGKGSS) are disordered.

This sequence belongs to the bacterial ribosomal protein bL25 family. CTC subfamily. In terms of assembly, part of the 50S ribosomal subunit; part of the 5S rRNA/L5/L18/L25 subcomplex. Contacts the 5S rRNA. Binds to the 5S rRNA independently of L5 and L18.

Its function is as follows. This is one of the proteins that binds to the 5S RNA in the ribosome where it forms part of the central protuberance. The protein is Large ribosomal subunit protein bL25 of Agrobacterium fabrum (strain C58 / ATCC 33970) (Agrobacterium tumefaciens (strain C58)).